Reading from the N-terminus, the 203-residue chain is Ras-related protein Rab-8B (203 aa).

GTP is bound by residues 22 to 29 (GDSGVGKS), 70 to 74 (DTAGQ), and 128 to 131 (NKCD). Residues Cys202 and Cys203 are each lipidated (S-geranylgeranyl cysteine).

The protein belongs to the small GTPase superfamily. Rab family.

It is found in the cell membrane. Functionally, protein transport. Probably involved in vesicular traffic. This chain is Ras-related protein Rab-8B (rab8B), found in Dictyostelium discoideum (Social amoeba).